A 521-amino-acid polypeptide reads, in one-letter code: Protein YjiT (521 aa).

The sequence is that of Protein YjiT (yjiT) from Escherichia coli (strain K12).